The following is a 993-amino-acid chain: MSPAMANPRVRKFNPIAFTPLPVTLITTIVYLAVLILVLVTYLVVPPAPTLEMSPRGVNLTEAWRDLQHLTGGFHPYNSRRNDDVHAWLLHRIEAIVREHSAAADDVPEVFVFDDNLSNLTYSNGGVSKSPIVGVYFESTNIIVYIRGSEDDPQNWWEWSNGKPKGKGGVLVNAHYDSVSTGYGATDDGMGVVSLLQLLRYFTIAGNKPRKGLVLLFNNGEEDYLNGARVYSQHAMSNFTHTFLNLEGAGAGGRACLFRTTDTEVTRFYKNAKHPFGSVLAGDGFKLGLIRSQTDYVVFNGVLGLRGLDVSFIAPRSRYHTDQDDARHTNVDSLWHMLSVAIATTEGLVSYTGTDFDSKTTDQDKVNSGDGTLGVWFDIFGSAFAVFRLHTLFALSVTLLVSAPLVLFITSIALSKTDRMYLFSMSKSLGGTSETVSLRGLRGLFRTPIILTVTTVITIGLAYLLEKINPYIVHSSQFAVWSMMLSVWIFVAWFLARVADFFRPSALHRAYSYTWIFIATWIMLVISTVYANQKGIAAGYFIFFYFAAVFLATWVSYLELFSLPRKGYYAHQTSRGQRRRSSSLSSRLLTPSADELPSDIGPNGAENLGDPDETDPTESTSLLRGQRTTFANYRTGGNSGVTEYTAEGEHVREAGIFGHEQSWSWTLPRWTWILQLLLLAPIVIILVGQVGLLLTTAMSQIGSDGVSTFIVYLACALLSTLLFAPLFPFIHRFTYHVPTFLLLIFIGTLIYNLVAFPFSPANRLKIFFIQEVNLDDGTNKVSLTGIQPYLTNTINAIPSAAGQTANCTQGPFGSLVRCSWSGPPPRVVKEDPGNDQTMGPYTWISYNITKTVGKNEARIKVSGRNTRACKLKFDNPVADYRISGSAVDHRLPHTSRQGVAEIRLWSRTWENTWVVDVDWHSNPVKPGESKDGDEKQDVSKNELSGKVICLWSDNNESGVIPALDEVRLYAPAWVAISKSADGLVEASHDFIIQ.

Residues 1 to 24 (MSPAMANPRVRKFNPIAFTPLPVT) are Cytoplasmic-facing. Residues 25 to 45 (LITTIVYLAVLILVLVTYLVV) traverse the membrane as a helical segment. Residues 46-391 (PPAPTLEMSP…SAFAVFRLHT (346 aa)) lie on the Vacuolar side of the membrane. Residues Asn59, Asn116, and Asn119 are each glycosylated (N-linked (GlcNAc...) asparagine). Residues His175 and Asp187 each coordinate Zn(2+). Glu221 (proton acceptor) is an active-site residue. Glu222 contacts Zn(2+). N-linked (GlcNAc...) asparagine glycosylation is present at Asn238. Glu247 and His320 together coordinate Zn(2+). A helical membrane pass occupies residues 392–412 (LFALSVTLLVSAPLVLFITSI). The Cytoplasmic portion of the chain corresponds to 413 to 447 (ALSKTDRMYLFSMSKSLGGTSETVSLRGLRGLFRT). The chain crosses the membrane as a helical span at residues 448-468 (PIILTVTTVITIGLAYLLEKI). Topologically, residues 469-475 (NPYIVHS) are vacuolar. Residues 476 to 496 (SQFAVWSMMLSVWIFVAWFLA) traverse the membrane as a helical segment. The Cytoplasmic portion of the chain corresponds to 497–509 (RVADFFRPSALHR). A helical transmembrane segment spans residues 510–530 (AYSYTWIFIATWIMLVISTVY). Over 531 to 534 (ANQK) the chain is Vacuolar. A helical transmembrane segment spans residues 535–555 (GIAAGYFIFFYFAAVFLATWV). Topologically, residues 556-672 (SYLELFSLPR…WSWTLPRWTW (117 aa)) are cytoplasmic. The segment at 579-621 (RRSSSLSSRLLTPSADELPSDIGPNGAENLGDPDETDPTESTS) is disordered. The chain crosses the membrane as a helical span at residues 673–693 (ILQLLLLAPIVIILVGQVGLL). Topologically, residues 694 to 709 (LTTAMSQIGSDGVSTF) are vacuolar. The chain crosses the membrane as a helical span at residues 710–730 (IVYLACALLSTLLFAPLFPFI). Over 731-737 (HRFTYHV) the chain is Cytoplasmic. The helical transmembrane segment at 738–758 (PTFLLLIFIGTLIYNLVAFPF) threads the bilayer. Residues 759-993 (SPANRLKIFF…VEASHDFIIQ (235 aa)) are Vacuolar-facing. N-linked (GlcNAc...) asparagine glycans are attached at residues Asn806, Asn847, and Asn955.

It belongs to the peptidase M28 family. The cofactor is Zn(2+).

The protein localises to the vacuole membrane. Functionally, may be involved in vacuolar sorting and osmoregulation. The polypeptide is Vacuolar membrane protease (Paracoccidioides lutzii (strain ATCC MYA-826 / Pb01) (Paracoccidioides brasiliensis)).